The following is a 376-amino-acid chain: Chaperone protein DnaJ (376 aa).

Residues 4–69 (DFYETLGVQK…QKRAAYDRFG (66 aa)) form the J domain. The CR-type zinc-finger motif lies at 133-211 (GKTAQIRVPA…CAGQGRVTEE (79 aa)). Cys-146, Cys-149, Cys-163, Cys-166, Cys-185, Cys-188, Cys-199, and Cys-202 together coordinate Zn(2+). 4 CXXCXGXG motif repeats span residues 146-153 (CTECSGSG), 163-170 (CSMCHGHG), 185-192 (CPQCQGRG), and 199-206 (CPKCAGQG).

The protein belongs to the DnaJ family. In terms of assembly, homodimer. The cofactor is Zn(2+).

Its subcellular location is the cytoplasm. Its function is as follows. Participates actively in the response to hyperosmotic and heat shock by preventing the aggregation of stress-denatured proteins and by disaggregating proteins, also in an autonomous, DnaK-independent fashion. Unfolded proteins bind initially to DnaJ; upon interaction with the DnaJ-bound protein, DnaK hydrolyzes its bound ATP, resulting in the formation of a stable complex. GrpE releases ADP from DnaK; ATP binding to DnaK triggers the release of the substrate protein, thus completing the reaction cycle. Several rounds of ATP-dependent interactions between DnaJ, DnaK and GrpE are required for fully efficient folding. Also involved, together with DnaK and GrpE, in the DNA replication of plasmids through activation of initiation proteins. In Mesorhizobium japonicum (strain LMG 29417 / CECT 9101 / MAFF 303099) (Mesorhizobium loti (strain MAFF 303099)), this protein is Chaperone protein DnaJ.